We begin with the raw amino-acid sequence, 211 residues long: SAGA-associated factor 11 homolog 2 (211 aa).

Residues 115-136 (CTCPNCDRLVAAARFAPHLEKC) form an SGF11-type zinc finger. Positions 149–211 (RRLATKEGSS…GSKKNNGKTF (63 aa)) are disordered. The segment covering 157–166 (SSASTSSTST) has biased composition (low complexity). S187 is subject to Phosphoserine. Positions 197–211 (SSRNNGSKKNNGKTF) are enriched in low complexity.

Belongs to the SGF11 family. Component of some SAGA transcription coactivator-HAT complexes, at least composed of Ada2b, not/nonstop, Pcaf/Gcn5, Sgf11 and Spt3. Within the SAGA complex, Sgf11, e(y)2, and not/nonstop form an additional subcomplex of SAGA called the DUB module (deubiquitination module). Interacts directly with not/nonstop. Interacts with the AMEX complex component xmas-2. Interacts with Cbp80; important for promoter recruitment of Sgf11 that is not associated with the DUB module.

It localises to the nucleus. It is found in the nucleoplasm. Its subcellular location is the cytoplasm. Component of the transcription regulatory histone acetylation (HAT) complex SAGA, a multiprotein complex that activates transcription by remodeling chromatin and mediating histone acetylation and deubiquitination. Within the SAGA complex, participates in a subcomplex that specifically deubiquitinates histone H2B. The SAGA complex is recruited to specific gene promoters by activators, where it is required for transcription. Required for nuclear receptor-mediated transactivation. Binds independently on SAGA to promoters in an RNA-dependent manner. Binds to mRNA and is essential for total mRNA export from the nucleus. Required to counteract heterochromatin silencing. Controls the development of neuronal connectivity in visual system by being required for accurate axon targeting in the optic lobe. Required for expression of ecdysone-induced genes such as br/broad. This chain is SAGA-associated factor 11 homolog 2, found in Drosophila grimshawi (Hawaiian fruit fly).